Reading from the N-terminus, the 450-residue chain is NADH-quinone oxidoreductase subunit H (450 aa).

9 consecutive transmembrane segments (helical) span residues 18 to 38 (WWLV…TPLL), 91 to 111 (ILAP…IPFG), 128 to 148 (LPVA…GIVL), 169 to 189 (VISY…DAGT), 201 to 221 (HTWY…SMVG), 262 to 282 (VTVS…PFPL), 292 to 312 (WWPV…FVWL), 324 to 344 (FMGL…MIVA), and 358 to 378 (SIAL…LLWK). The tract at residues 387-450 (APEKPVEPRG…TGPTQENSDD (64 aa)) is disordered. Basic and acidic residues predominate over residues 390–400 (KPVEPRGRAEL). Positions 433–450 (VSVTGAHSTGPTQENSDD) are enriched in polar residues.

Belongs to the complex I subunit 1 family. NDH-1 is composed of 14 different subunits. Subunits NuoA, H, J, K, L, M, N constitute the membrane sector of the complex.

The protein resides in the cell membrane. It catalyses the reaction a quinone + NADH + 5 H(+)(in) = a quinol + NAD(+) + 4 H(+)(out). Functionally, NDH-1 shuttles electrons from NADH, via FMN and iron-sulfur (Fe-S) centers, to quinones in the respiratory chain. The immediate electron acceptor for the enzyme in this species is believed to be ubiquinone. Couples the redox reaction to proton translocation (for every two electrons transferred, four hydrogen ions are translocated across the cytoplasmic membrane), and thus conserves the redox energy in a proton gradient. This subunit may bind ubiquinone. This is NADH-quinone oxidoreductase subunit H from Rhodococcus jostii (strain RHA1).